The sequence spans 59 residues: Large ribosomal subunit protein uL30 (59 aa).

The protein belongs to the universal ribosomal protein uL30 family. As to quaternary structure, part of the 50S ribosomal subunit.

The chain is Large ribosomal subunit protein uL30 from Lactococcus lactis subsp. lactis (strain IL1403) (Streptococcus lactis).